The primary structure comprises 525 residues: NAD(P)H-quinone oxidoreductase chain 4-1 (525 aa).

The next 14 membrane-spanning stretches (helical) occupy residues 4–24 (FPWL…IPII), 37–57 (LAVG…GFDL), 89–109 (LIIL…PVTL), 111–131 (PKLF…VFAV), 134–154 (ILLF…ILSI), 167–187 (FILY…TLAF), 210–230 (LLLY…FPLH), 241–261 (TAPA…YALL), 273–293 (AVFA…AAFT), 309–329 (ISHM…GMSG), 330–350 (AMLQ…MVGA), 385–405 (LALP…GFAT), 416–436 (IVVV…LSML), and 462–482 (VFII…PKLI).

Belongs to the complex I subunit 4 family.

The protein localises to the cellular thylakoid membrane. The enzyme catalyses a plastoquinone + NADH + (n+1) H(+)(in) = a plastoquinol + NAD(+) + n H(+)(out). It carries out the reaction a plastoquinone + NADPH + (n+1) H(+)(in) = a plastoquinol + NADP(+) + n H(+)(out). NDH-1 shuttles electrons from NAD(P)H, via FMN and iron-sulfur (Fe-S) centers, to quinones in the respiratory chain. The immediate electron acceptor for the enzyme in this species is believed to be plastoquinone. Couples the redox reaction to proton translocation (for every two electrons transferred, four hydrogen ions are translocated across the cytoplasmic membrane), and thus conserves the redox energy in a proton gradient. This Synechocystis sp. (strain ATCC 27184 / PCC 6803 / Kazusa) protein is NAD(P)H-quinone oxidoreductase chain 4-1 (ndhD1).